Reading from the N-terminus, the 130-residue chain is Small ribosomal subunit protein uS11 (130 aa).

This sequence belongs to the universal ribosomal protein uS11 family. As to quaternary structure, part of the 30S ribosomal subunit. Interacts with proteins S7 and S18. Binds to IF-3.

In terms of biological role, located on the platform of the 30S subunit, it bridges several disparate RNA helices of the 16S rRNA. Forms part of the Shine-Dalgarno cleft in the 70S ribosome. The chain is Small ribosomal subunit protein uS11 from Thermotoga maritima (strain ATCC 43589 / DSM 3109 / JCM 10099 / NBRC 100826 / MSB8).